The primary structure comprises 145 residues: Hemoglobin fetal subunit beta (145 aa).

The 145-residue stretch at 1-145 (MLTAEEKASV…VANALAHRYH (145 aa)) folds into the Globin domain. Positions 62 and 91 each coordinate heme b.

This sequence belongs to the globin family. In terms of assembly, heterotetramer of two alpha chains and two beta chains.

The polypeptide is Hemoglobin fetal subunit beta (Ovis aries (Sheep)).